A 372-amino-acid chain; its full sequence is Cytochrome b (372 aa).

4 consecutive transmembrane segments (helical) span residues 29 to 49 (FGSM…ILSW), 73 to 95 (WFIR…LHIL), 108 to 128 (VWYS…LGYV), and 174 to 194 (FFSF…IHLI). The heme b site is built by His-79 and His-93. Residues His-178 and His-192 each coordinate heme b. His-197 lines the a ubiquinone pocket. 4 helical membrane-spanning segments follow: residues 220-240 (FSLK…FCIF), 284-301 (LGGV…VFLG), 311-336 (MVKT…IMGG), and 344-363 (DILG…IMLL).

It belongs to the cytochrome b family. In terms of assembly, the main subunits of complex b-c1 are: cytochrome b, cytochrome c1 and the Rieske protein. The cofactor is heme b.

The protein localises to the mitochondrion inner membrane. Its function is as follows. Component of the ubiquinol-cytochrome c reductase complex (complex III or cytochrome b-c1 complex) that is part of the mitochondrial respiratory chain. The b-c1 complex mediates electron transfer from ubiquinol to cytochrome c. Contributes to the generation of a proton gradient across the mitochondrial membrane that is then used for ATP synthesis. The chain is Cytochrome b (mt:Cyt-b) from Leptorhynchoides thecatus (Thorny-headed worm).